The sequence spans 238 residues: Ribonuclease M (238 aa).

5 disulfides stabilise this stretch: Cys5-Cys22, Cys13-Cys58, Cys21-Cys126, Cys66-Cys118, and Cys191-Cys225. The active site involves His51. Asn74 carries N-linked (GlcNAc...) asparagine glycosylation. Active-site residues include Glu111 and His115.

The protein belongs to the RNase T2 family.

The catalysed reaction is a ribonucleotidyl-ribonucleotide-RNA + H2O = a 3'-end 3'-phospho-ribonucleotide-RNA + a 5'-end dephospho-ribonucleoside-RNA + H(+). This is a base non-specific and adenylic acid preferential ribonuclease. The polypeptide is Ribonuclease M (Aspergillus phoenicis (Aspergillus saitoi)).